The primary structure comprises 283 residues: Phosphatidylglycerol--prolipoprotein diacylglyceryl transferase (283 aa).

The next 4 helical transmembrane spans lie at 17 to 37, 56 to 76, 92 to 112, and 117 to 137; these read LAVRWYALSYILGFILFTFLG, FLTWGILGVILGGRLGYVLFY, WEGGMSFHGGFLGVVIAIWLF, and GIGFLKLMDTVAPLVPLGLAS. Residue Arg-139 participates in a 1,2-diacyl-sn-glycero-3-phospho-(1'-sn-glycerol) binding. 3 consecutive transmembrane segments (helical) span residues 194–214, 222–242, and 255–275; these read PSQLYQFALEGICLFAVVWLF, GQVASLFLGGYGIFRFIAEFA, and GLSMGQWLSVPMIVLGIVGFV.

Belongs to the Lgt family.

The protein resides in the cell inner membrane. It catalyses the reaction L-cysteinyl-[prolipoprotein] + a 1,2-diacyl-sn-glycero-3-phospho-(1'-sn-glycerol) = an S-1,2-diacyl-sn-glyceryl-L-cysteinyl-[prolipoprotein] + sn-glycerol 1-phosphate + H(+). Its pathway is protein modification; lipoprotein biosynthesis (diacylglyceryl transfer). Catalyzes the transfer of the diacylglyceryl group from phosphatidylglycerol to the sulfhydryl group of the N-terminal cysteine of a prolipoprotein, the first step in the formation of mature lipoproteins. The protein is Phosphatidylglycerol--prolipoprotein diacylglyceryl transferase of Neisseria meningitidis serogroup A / serotype 4A (strain DSM 15465 / Z2491).